The primary structure comprises 606 residues: WD repeat-containing protein 1 (606 aa).

WD repeat units follow at residues 4-45 (EIKK…LRNI), 48-87 (PAIA…IWDT), 93-135 (LLKY…LWDS), 138-176 (SVGE…FFEG), 180-218 (KFKF…IYDG), 224-263 (VCAL…IWDV), 270-306 (NTFT…YLDK), 311-351 (KPLR…YWDS), 358-408 (SFAG…KLDV), 432-474 (LKDQ…LYSI), 480-518 (KDEG…VFSV), 523-561 (SENN…VWTL), and 566-604 (TRVK…EWTI). 4 positions are modified to N6-acetyllysine: Lys-28, Lys-81, Lys-95, and Lys-115. Residue Tyr-238 is modified to Phosphotyrosine. N6-acetyllysine is present on Lys-480.

This sequence belongs to the WD repeat AIP1 family.

The protein resides in the cytoplasm. The protein localises to the cytoskeleton. It is found in the cell projection. It localises to the podosome. Induces disassembly of actin filaments in conjunction with ADF/cofilin family proteins. Enhances cofilin-mediated actin severing. Involved in cytokinesis. Involved in chemotactic cell migration by restricting lamellipodial membrane protrusions. Involved in myocardium sarcomere organization. Required for cardiomyocyte growth and maintenance. Involved in megakaryocyte maturation and platelet shedding. Required for the establishment of planar cell polarity (PCP) during follicular epithelium development and for cell shape changes during PCP; the function seems to implicate cooperation with CFL1 and/or DSTN/ADF. Involved in the generation/maintenance of cortical tension. Involved in assembly and maintenance of epithelial apical cell junctions and plays a role in the organization of the perijunctional actomyosin belt. This Bos taurus (Bovine) protein is WD repeat-containing protein 1 (WDR1).